The primary structure comprises 393 residues: GTP exchange factor for ARFs 1 (393 aa).

Residues 1 to 12 (MSSRYSERNGLS) show a composition bias toward polar residues. Residues 1 to 21 (MSSRYSERNGLSETEKMTLPK) are disordered. The stretch at 12–54 (SETEKMTLPKVRKRKAQLVDEIEALKNEVREVDEELDQVYYTH) forms a coiled coil. Positions 53–239 (THPKSKEYHK…TEVYESVSVT (187 aa)) constitute an SEC7 domain. In terms of domain architecture, PH spans 261–377 (HAEREGWLFK…MRSWINAISR (117 aa)).

In terms of biological role, promotes guanine-nucleotide exchange on ARF. Promotes the activation of ARF through replacement of GDP with GTP. Plays a role in cell shedding during embryogenesis, probably by promoting the endocytosis of cell adhesion molecules. The sequence is that of GTP exchange factor for ARFs 1 (grp-1) from Caenorhabditis elegans.